A 280-amino-acid chain; its full sequence is uncharacterized protein (280 aa).

Belongs to the metallo-dependent hydrolases superfamily.

This is an uncharacterized protein from Methanocaldococcus jannaschii (strain ATCC 43067 / DSM 2661 / JAL-1 / JCM 10045 / NBRC 100440) (Methanococcus jannaschii).